We begin with the raw amino-acid sequence, 429 residues long: UDP-N-acetylglucosamine 1-carboxyvinyltransferase (429 aa).

22–23 (KN) provides a ligand contact to phosphoenolpyruvate. R102 serves as a coordination point for UDP-N-acetyl-alpha-D-glucosamine. C126 (proton donor) is an active-site residue. At C126 the chain carries 2-(S-cysteinyl)pyruvic acid O-phosphothioketal. Residues 131-135 (RPVDL), D316, and I338 each bind UDP-N-acetyl-alpha-D-glucosamine.

This sequence belongs to the EPSP synthase family. MurA subfamily.

Its subcellular location is the cytoplasm. The catalysed reaction is phosphoenolpyruvate + UDP-N-acetyl-alpha-D-glucosamine = UDP-N-acetyl-3-O-(1-carboxyvinyl)-alpha-D-glucosamine + phosphate. It participates in cell wall biogenesis; peptidoglycan biosynthesis. Functionally, cell wall formation. Adds enolpyruvyl to UDP-N-acetylglucosamine. This chain is UDP-N-acetylglucosamine 1-carboxyvinyltransferase, found in Nitrobacter winogradskyi (strain ATCC 25391 / DSM 10237 / CIP 104748 / NCIMB 11846 / Nb-255).